A 538-amino-acid polypeptide reads, in one-letter code: Carotenoid 9,10(9',10')-cleavage dioxygenase 1 (538 aa).

Residues H222, H270, H336, and H523 each coordinate Fe cation.

It belongs to the carotenoid oxygenase family. As to quaternary structure, homodimer. Fe(2+) is required as a cofactor. In terms of tissue distribution, high expression in flowers and siliques. Also detected in stems, leaves and roots.

Its subcellular location is the cytoplasm. It catalyses the reaction all-trans-zeaxanthin + 2 O2 = 4,9-dimethyldodeca-2,4,6,8,10-pentaenedial + 2 (3R)-hydroxy-beta-ionone. In terms of biological role, cleaves a variety of carotenoids symmetrically at both the 9-10 and 9'-10' double bonds. Active on beta,beta-carotene, lutein, zeaxanthin, all-trans-violaxanthin, 9-cis-violaxanthin and 9'-cis-neoxanthin. With most substrates, the carotenoid is symmetrically cleaved. Probably not involved in abscisic acid biosynthesis. The sequence is that of Carotenoid 9,10(9',10')-cleavage dioxygenase 1 (CCD1) from Arabidopsis thaliana (Mouse-ear cress).